A 202-amino-acid chain; its full sequence is Hypoxanthine-guanine phosphoribosyltransferase (202 aa).

Lysine 66 and glycine 67 together coordinate diphosphate. Mg(2+)-binding residues include glutamate 122 and aspartate 123. Aspartate 126 (proton acceptor) is an active-site residue. GMP contacts are provided by residues lysine 154, 175-176 (FV), and aspartate 182. Arginine 188 provides a ligand contact to diphosphate.

The protein belongs to the purine/pyrimidine phosphoribosyltransferase family. Homodimer and homotetramer in equilibrium. The presence or absence of divalent metal ions, as well as phosphate, can affect the oligomerization state of the enzyme. Likely functions as a tetramer (rather than a dimer) in its biological environment, which is the most active form. The dimeric structure is also active though ~50% of that of the tetramer. The cofactor is Mg(2+).

It localises to the cytoplasm. The catalysed reaction is IMP + diphosphate = hypoxanthine + 5-phospho-alpha-D-ribose 1-diphosphate. It catalyses the reaction GMP + diphosphate = guanine + 5-phospho-alpha-D-ribose 1-diphosphate. Its pathway is purine metabolism; IMP biosynthesis via salvage pathway; IMP from hypoxanthine: step 1/1. It participates in purine metabolism; GMP biosynthesis via salvage pathway; GMP from guanine: step 1/1. With respect to regulation, competitively inhibited by acyclic nucleoside phosphonates (ANPs) with Ki values as low as 0.69 uM. Prodrugs of these compounds arrest the growth of a virulent strain of M.tuberculosis with MIC50 values as low as 4.5 uM and possess low cytotoxicity in mammalian cells. Inhibited by pyrrolidine nucleoside bisphosphonates, which are also able to arrest the growth of virulent M.tuberculosis not only in its replicating phase but also in its latent phase, and to arrest the growth of M.tuberculosis in infected macrophages while having low cytotoxicity in mammalian cells. In terms of biological role, purine salvage pathway enzyme that catalyzes the transfer of the ribosyl-5-phosphate group from 5-phospho-alpha-D-ribose 1-diphosphate (PRPP) to the N9 position of the 6-oxopurines hypoxanthine and guanine to form the corresponding ribonucleotides IMP (inosine 5'-monophosphate) and GMP (guanosine 5'-monophosphate), with the release of PPi. Thus, specifically recycles hypoxanthine and guanine imported from the external medium, and converts them to IMP and GMP, respectively. Cannot use xanthine as substrate. This Mycobacterium tuberculosis (strain ATCC 25618 / H37Rv) protein is Hypoxanthine-guanine phosphoribosyltransferase.